We begin with the raw amino-acid sequence, 160 residues long: Phosphopantetheine adenylyltransferase (160 aa).

Thr10 contributes to the substrate binding site. Residues 10 to 11 (TF) and His18 each bind ATP. Substrate-binding residues include Lys42, Leu74, and Arg88. ATP-binding positions include 89-91 (GLR), Glu99, and 124-130 (NSFISST).

It belongs to the bacterial CoaD family. In terms of assembly, homohexamer. Mg(2+) serves as cofactor.

Its subcellular location is the cytoplasm. It catalyses the reaction (R)-4'-phosphopantetheine + ATP + H(+) = 3'-dephospho-CoA + diphosphate. Its pathway is cofactor biosynthesis; coenzyme A biosynthesis; CoA from (R)-pantothenate: step 4/5. Functionally, reversibly transfers an adenylyl group from ATP to 4'-phosphopantetheine, yielding dephospho-CoA (dPCoA) and pyrophosphate. In Photobacterium damsela subsp. piscicida (Pasteurella piscicida), this protein is Phosphopantetheine adenylyltransferase.